A 474-amino-acid chain; its full sequence is Membrane-bound acylglycerophosphatidylinositol O-acyltransferase mboat7 (474 aa).

At 1-5 (MSPNE) the chain is on the cytoplasmic side. A helical transmembrane segment spans residues 6-22 (LTYLAILLGSAPLGFLF). Over 23-33 (KNGSPQVKQRG) the chain is Lumenal. The chain crosses the membrane as a helical span at residues 34–57 (SAAVGVALTLITCHIHSLHSAITI). Residues 58–73 (LGTWLIIKILPRSCHF) are Cytoplasmic-facing. The helical transmembrane segment at 74 to 93 (PTLGWTFTYLLFFRTITYFD) threads the bilayer. The Lumenal segment spans residues 94 to 193 (IPAPTPFTNA…IPSWKPLVSR (100 aa)). Residues 194 to 211 (LKPAPVFGVLFLIASQYF) form a helical membrane-spanning segment. Residues 212-230 (PLDYVKTDEFYEQAFLYRL) are Cytoplasmic-facing. Residues 231-260 (FYMVPTFFIFRMRFYVAWIFAECGCISAAF) traverse the membrane as a helical segment. At 261–427 (GAYPVSAKSR…LTFTDTYRYW (167 aa)) the chain is on the lumenal side. An N-linked (GlcNAc...) asparagine glycan is attached at N322. The helical transmembrane segment at 428–448 (QSIYFSVHVLAISLFLLGRVL) threads the bilayer. At 449-473 (ALKSPRRPRNTKEEKAEAKQENRLQ) the chain is on the cytoplasmic side.

Belongs to the membrane-bound acyltransferase family.

It localises to the endoplasmic reticulum membrane. The enzyme catalyses a 1-acyl-sn-glycero-3-phospho-(1D-myo-inositol) + (5Z,8Z,11Z,14Z)-eicosatetraenoyl-CoA = a 1-acyl-2-(5Z,8Z,11Z,14Z-eicosatetraenoyl)-sn-glycero-3-phospho-(1D-myo-inositol) + CoA. The catalysed reaction is (5Z,8Z,11Z,14Z)-eicosatetraenoyl-CoA + 1-hexadecanoyl-sn-glycero-3-phosphocholine = 1-hexadecanoyl-2-(5Z,8Z,11Z,14Z-eicosatetraenoyl)-sn-glycero-3-phosphocholine + CoA. It carries out the reaction a 1-acyl-sn-glycero-3-phospho-(1D-myo-inositol) + an acyl-CoA = a 1,2-diacyl-sn-glycero-3-phospho-(1D-myo-inositol) + CoA. It catalyses the reaction 1-octadecanoyl-sn-glycero-3-phospho-(1D-myo-inositol) + (5Z,8Z,11Z,14Z)-eicosatetraenoyl-CoA = 1-octadecanoyl-2-(5Z,8Z,11Z,14Z-eicosatetraenoyl)-sn-glycero-3-phospho-(1D-myo-inositol) + CoA. It participates in lipid metabolism; phospholipid metabolism. Acyltransferase which catalyzes the transfer of an acyl group from an acyl-CoA to a lysophosphatidylinositol (1-acylglycerophosphatidylinositol or LPI) leading to the production of a phosphatidylinositol (1,2-diacyl-sn-glycero-3-phosphoinositol or PI) and participates in the reacylation step of the phospholipid remodeling pathway also known as the Lands cycle. Prefers arachidonoyl-CoA as the acyl donor, thus contributing to the regulation of free levels arachidonic acid in cell. This is Membrane-bound acylglycerophosphatidylinositol O-acyltransferase mboat7 (mboat7) from Xenopus laevis (African clawed frog).